We begin with the raw amino-acid sequence, 279 residues long: Protein phosphatase 1 regulatory subunit 3E (279 aa).

A phosphoserine mark is found at serine 16 and serine 33. The disordered stretch occupies residues 28-86 (RSQRPSLEEEPEEEPGEGGTRFGARSRAHAPSRGRRARSAPAGGGGARAPRSRSPDTRK). The segment covering 51-65 (ARSRAHAPSRGRRAR) has biased composition (basic residues). Position 66 is a phosphoserine (serine 66). Positions 87–90 (RVRF) match the PP1-binding motif motif. Residues 154–259 (AARLLTQRIC…NNGGRDYALR (106 aa)) form the CBM21 domain. Residues 176 to 198 (GSARVVDLAYEKRVSVRWSADGW) are glycogen-binding motif. The interval 248-256 (WDNNGGRDY) is substrate-binding motif.

As to expression, expressed in skeletal muscle and heart with barely detectable levels in liver.

Acts as a glycogen-targeting subunit for PP1. PP1 is involved in glycogen metabolism and contributes to the activation of glycogen synthase leading to an increase in glycogen synthesis. The sequence is that of Protein phosphatase 1 regulatory subunit 3E (PPP1R3E) from Homo sapiens (Human).